The primary structure comprises 61 residues: Sec-independent protein translocase protein TatA (61 aa).

The helical transmembrane segment at 2–22 (GLSGISPLSLLLILAIIVALF) threads the bilayer.

It belongs to the TatA/E family. The Tat system comprises two distinct complexes: a TatABC complex, containing multiple copies of TatA, TatB and TatC subunits, and a separate TatA complex, containing only TatA subunits. Substrates initially bind to the TatABC complex, which probably triggers association of the separate TatA complex to form the active translocon.

The protein resides in the cell inner membrane. In terms of biological role, part of the twin-arginine translocation (Tat) system that transports large folded proteins containing a characteristic twin-arginine motif in their signal peptide across membranes. TatA could form the protein-conducting channel of the Tat system. The chain is Sec-independent protein translocase protein TatA from Legionella pneumophila (strain Paris).